We begin with the raw amino-acid sequence, 319 residues long: Transcription factor jun-1 (319 aa).

2 disordered regions span residues 1-52 (MEED…EKES) and 216-264 (NGVN…CRQK). Positions 8 to 19 (PPSSSTSSESPE) are enriched in low complexity. Positions 28 to 38 (PTRRRKNSKKD) are enriched in basic residues. The tract at residues 244 to 285 (KKKLERKRARNRQAATKCRQKKMDRIKELEEQVLHEKHRGQR) is basic motif. The 64-residue stretch at 244 to 307 (KKKLERKRAR…EHFRRTVEHH (64 aa)) folds into the bZIP domain. The interval 286–293 (LDAELLEL) is leucine-zipper.

Belongs to the bZIP family. Jun subfamily. Heterodimer; with fos-1. In terms of tissue distribution, isoform a, isoform b, isoform c and isoform d are expressed in the spermatheca.

It localises to the nucleus. Transcription factor that recognizes and binds to the AP-1 non-canonical enhancer heptamer motif 5'-TTAGTCA-3'. Required for ovulation. Controls plc-1 expression in the spermatheca to regulate spermathecal valve dilation. The sequence is that of Transcription factor jun-1 from Caenorhabditis elegans.